A 176-amino-acid polypeptide reads, in one-letter code: Adenine phosphoribosyltransferase (176 aa).

Belongs to the purine/pyrimidine phosphoribosyltransferase family. As to quaternary structure, homodimer.

The protein resides in the cytoplasm. It carries out the reaction AMP + diphosphate = 5-phospho-alpha-D-ribose 1-diphosphate + adenine. It functions in the pathway purine metabolism; AMP biosynthesis via salvage pathway; AMP from adenine: step 1/1. Functionally, catalyzes a salvage reaction resulting in the formation of AMP, that is energically less costly than de novo synthesis. The polypeptide is Adenine phosphoribosyltransferase (Methylobacillus flagellatus (strain ATCC 51484 / DSM 6875 / VKM B-1610 / KT)).